A 332-amino-acid polypeptide reads, in one-letter code: Nucleoid-associated protein VVA0877 (332 aa).

It belongs to the YejK family.

The protein resides in the cytoplasm. It localises to the nucleoid. The polypeptide is Nucleoid-associated protein VVA0877 (Vibrio vulnificus (strain YJ016)).